Here is a 1016-residue protein sequence, read N- to C-terminus: Vacuolar membrane protease (1016 aa).

The tract at residues 1 to 36 is disordered; sequence MAETESGTGNSPSHRLSETSNASGNRSHQQSKQIAS. Topologically, residues 1–57 are cytoplasmic; that stretch reads MAETESGTGNSPSHRLSETSNASGNRSHQQSKQIASYKSSKPNVFIRFIRAIFGYRK. A helical transmembrane segment spans residues 58 to 78; that stretch reads TSVTLFVFITIIATLILVELS. Topologically, residues 79–408 are vacuolar; the sequence is NSLDFSVKLP…FVIPASQLVL (330 aa). 2 N-linked (GlcNAc...) asparagine glycosylation sites follow: N147 and N177. Zn(2+) contacts are provided by H191 and D203. E238 acts as the Proton acceptor in catalysis. E239, E264, and H337 together coordinate Zn(2+). The helical transmembrane segment at 409–429 threads the bilayer; that stretch reads INVTCLAVIPLISLPLLVIIF. Over 430–438 the chain is Cytoplasmic; the sequence is NYKKNWHIG. Residues 439–459 form a helical membrane-spanning segment; it reads FINAIKFPVSLVLSICILNII. Residues 460–481 lie on the Vacuolar side of the membrane; sequence THNVIASINEFLPNSSYDSIVS. Residue N473 is glycosylated (N-linked (GlcNAc...) asparagine). Residues 482-502 traverse the membrane as a helical segment; it reads TLYSLFLLLNYLFLNGINFIF. Topologically, residues 503–511 are cytoplasmic; the sequence is KGYKGLYHD. The helical transmembrane segment at 512 to 532 threads the bilayer; sequence EKLILIIQTSFIYWVLLIVST. The Vacuolar portion of the chain corresponds to 533-547; it reads NKLSKNKIGNDHTGE. Residues 548–568 form a helical membrane-spanning segment; sequence FPLIMLFLLQSIGALFGLFSW. The Cytoplasmic portion of the chain corresponds to 569–646; that stretch reads SFKKTTPDEL…SFSYDWSIQY (78 aa). Residues 598–622 are disordered; that stretch reads YGSNEAELESGEPISSNSSVSLNSS. Over residues 612–622 the composition is skewed to low complexity; it reads SSNSSVSLNSS. Residues 647–667 traverse the membrane as a helical segment; that stretch reads VVIVPLSSLIVYNTGSLLLSG. Over 668 to 681 the chain is Vacuolar; that stretch reads LNKSIQESLNAEKL. N669 carries N-linked (GlcNAc...) asparagine glycosylation. The chain crosses the membrane as a helical span at residues 682 to 702; sequence IFDLIQLVAVTLAIPFLPFIF. Residues 703–706 lie on the Cytoplasmic side of the membrane; it reads KINR. Residues 707 to 727 traverse the membrane as a helical segment; it reads LLVTALVLVFCSGFISIFLKS. Residues 728-1016 lie on the Vacuolar side of the membrane; it reads PFDQLNPLKL…LVSVSKYVEI (289 aa). N-linked (GlcNAc...) asparagine glycans are attached at residues N778, N821, N850, N875, and N977.

The protein belongs to the peptidase M28 family. Zn(2+) serves as cofactor.

The protein resides in the vacuole membrane. Its function is as follows. May be involved in vacuolar sorting and osmoregulation. This is Vacuolar membrane protease from Debaryomyces hansenii (strain ATCC 36239 / CBS 767 / BCRC 21394 / JCM 1990 / NBRC 0083 / IGC 2968) (Yeast).